We begin with the raw amino-acid sequence, 198 residues long: GTP-binding protein Di-Ras1 (198 aa).

GTP-binding positions include 17–22 (GVGKSS), 33–39 (RDTYIPT), 61–65 (DTTGS), 121–125 (NKCDE), alanine 151, and 151–152 (AK). Residues 36–44 (YIPTIEDTY) carry the Effector region motif. The segment covering 178 to 192 (DGKRSGKQKRTDRVK) has biased composition (basic and acidic residues). Positions 178 to 198 (DGKRSGKQKRTDRVKGKCTLM) are disordered. Cysteine 195 is subject to Cysteine methyl ester. Cysteine 195 carries S-geranylgeranyl cysteine lipidation. The propeptide at 196-198 (TLM) is removed in mature form.

Belongs to the small GTPase superfamily. Di-Ras family. Highly expressed in heart and brain.

The protein localises to the cell membrane. Its function is as follows. Displays low GTPase activity and exists predominantly in the GTP-bound form. This chain is GTP-binding protein Di-Ras1 (DIRAS1), found in Homo sapiens (Human).